The chain runs to 1805 residues: MKPFDKKPSLQPIYDIGFDDGYLQSEYEKNRSKTDVDKIENQLLKEIKSLEDELKNLKGLKNQAEDNPELDKKINHLEVDLNRLVNEYKNFQFQKNHMVDKVSELDNLTRFYKNELTRLQQENADFLNSKYANLANFQANYHNKLNDFHRLIENQNQTINRLNQKINGNQNLIDNNVALLQNPNITVEKKNYLLNVIDQLYNELDQLENQKRLLSIEYENTYRELVSADNELQNVYENIDQNQIQFKHQYQTYRDELSQLERKIQLTKQELVDKESALRVKIDDADFYINARLAELDDVAKQLSFQDGITKQNAQHVEDKLVALNKEKDRLNTQKEAFFNLRQSALIDINKLQQENELFAKHLEHQQNEFEQKQSDSLLKLETEYKALQHKINEFKNESATKSEELLNQERELFEKRREIDTLLTQASLEYEHQRESSQLLKDKQNEVKQHFQNLEYAKKELDKERNLLDQQKKVDSEAIFQLKEKVAQERKELEELYLVKKQKQDQKENELLFFEKQLKQHQADFENELEAKQQELFEAKHALERSFIKLEDKEKDLNTKAQQIANEFSQLKTDKSKSADFELMLQNEYENLQQEKQKLFQERTYFERNAAVLSNRLQQKREELLQQKETLDQLTKSFEQERLINQREHKELVASVEKQKEILGKKLQDFSQTSLNASKNLAEREMAIKFKEKEIEATEKQLLNDVNNAEVIQADLAQLNQSLNQERSELQNAKQRIADFHNDSLKKLNEYELSLQKRLQELQTLEANQKQHSYQNQAYFEGELDKLNREKQAFLNLRKKQTMEVDAIKQRLSDKHQALNMQQAELDRKTHELNNAFLNHDADQKSLQDQLATVKETQKLIDLERSALLEKQREFAENVAGFKRHWSNKTSQLQKIYELTKKQESEQTQKETELKIAFSDLQKDYQVFELQKDQEFRQIEAKQRELDKLAEKNNQVKLELDNRFQALQNQKQDTVQAQLELEREQHQLNLEQTAFNQANESLLKQREQLTKKIQAFHYELKKRNQFLALKGKRLFAKEQDQQRKDQEINWRFKQFEKEYTDFDEAKKRELEELEKIRRSLSQSNVELERKREKLATDFTNLNKVQHNTQINRDQLNSQIRQFLLERKNFQRFSNEANAKKAFLIKRLRSFASNLKLQKEALAIQKLEFDKRDEQQKKELQQATLQLEQFKFEKQNFDIEKQRQLVAIKTQCEKLSDEKKALNQKLVELKNLSQTYLANKNKAEYSQQQLQQKYTNLLDLKENLERTKDQLDKKHRSIFARLTKFANDLRFEKKQLLKAQRIVDDKNRLLKENERNLHFLSNETERKRAVLEDQISYFEKQRKQATDAILASHKEVKKKEGELQKLLVELETRKTKLNNDFAKFSRQREEFENQRLKLLELQKTLQTQTNSNNFKTKAIQEIENSYKRGMEELNFQKKEFDKNKSRLYEYFRKMRDEIERKESQVKLVLKETQRKANLLEAQANKLNIEKNTIDFKEKELKAFKDKVDQDIDSTNKQRKELNELLNENKLLQQSLIERERAINSKDSLLNKKIETIKRQLHDKEMRVLRLVDRMKLAEQKYQTEINRLRTQTFDSEKQDIKNFFPPLFKINGNDMAFPYLYPWLYPQQKQDDNTLQIRQLFEQQLQFMQQRYENELNELRRQRNLLEKKLDQIQLESQLNNKQSEFSKVESMMEKLLEKTESRLNDFDQKINYLTKKVNQHNTYQPSSYQPTPSYQDSDKQQLLFRIQELEKQNLFQQQFQPAPAVVQQPTSFAAPNITKQQQIAQLNAEINNIKRLIAQKAASK.

Coiled-coil stretches lie at residues 28 to 838 (EKNR…NNAF), 914 to 1591 (ELKI…LRTQ), 1632 to 1723 (DNTL…QHNT), and 1777 to 1804 (NITKQQQIAQLNAEINNIKRLIAQKAAS).

Functionally, component of the cytoskeleton-like structure which stabilizes the shape of the wall-less Mycoplasma. This cytoskeleton-like network of accessory proteins containing HMW proteins 1 to 5 allows the proper anchoring of cytadhesin proteins in the mycoplasmal membrane at the attachment organelle. This Mycoplasma genitalium (strain ATCC 33530 / DSM 19775 / NCTC 10195 / G37) (Mycoplasmoides genitalium) protein is Cytadherence high molecular weight protein 2 (hmw2).